The following is a 115-amino-acid chain: NADH-ubiquinone oxidoreductase chain 3 (115 aa).

The next 3 helical transmembrane spans lie at 4 to 24 (LVTM…AFWL), 55 to 75 (FFLV…LLPM), and 86 to 106 (TMTL…AYEW).

Belongs to the complex I subunit 3 family. As to quaternary structure, core subunit of respiratory chain NADH dehydrogenase (Complex I) which is composed of 45 different subunits. Interacts with TMEM186. Interacts with TMEM242.

The protein localises to the mitochondrion inner membrane. The catalysed reaction is a ubiquinone + NADH + 5 H(+)(in) = a ubiquinol + NAD(+) + 4 H(+)(out). Core subunit of the mitochondrial membrane respiratory chain NADH dehydrogenase (Complex I) which catalyzes electron transfer from NADH through the respiratory chain, using ubiquinone as an electron acceptor. Essential for the catalytic activity of complex I. This Nelsonia neotomodon (Diminutive woodrat) protein is NADH-ubiquinone oxidoreductase chain 3.